Reading from the N-terminus, the 155-residue chain is MGVTSYTLETTTPVAPTRLFKALVVDSDNLIPKLMPQVKNIEAEGDGSIKKMTFVEGSPIKYLKHKIHVVDDKNLVTKYSMIEGDVLGDKLESISYDLKFEAHGNGGCVCKSIAEYHTKGDYVLKDEDHNEGKKQGMELFKIVEAYLLANPSVYA.

The protein belongs to the BetVI family.

In Solanum tuberosum (Potato), this protein is Pathogenesis-related protein STH-21 (STH-21).